The sequence spans 249 residues: Probable transcriptional regulatory protein Tgr7_2237 (249 aa).

It belongs to the TACO1 family.

It localises to the cytoplasm. The sequence is that of Probable transcriptional regulatory protein Tgr7_2237 from Thioalkalivibrio sulfidiphilus (strain HL-EbGR7).